The following is a 306-amino-acid chain: Manganese transport system membrane protein MntB (306 aa).

The Periplasmic segment spans residues 1-25 (MNQLVVAFPFWHWLVEPLQYEFLIR). Residues 26–46 (AIWVSAFVGLVCAVLSCYITL) traverse the membrane as a helical segment. The Cytoplasmic portion of the chain corresponds to 47–48 (KG). A helical membrane pass occupies residues 49-69 (WSLMGDAISHAVVPGVVLAYA). Over 70–71 (LN) the chain is Periplasmic. Residues 72-92 (IPFAIGAFTFGFGATVAIGYV) traverse the membrane as a helical segment. The Cytoplasmic segment spans residues 93–101 (KSKTRLKED). Residues 102-122 (AVIGIVFTGFFALGLVLVTKI) form a helical membrane-spanning segment. Topologically, residues 123–141 (PSNVDLFHILFGNVLGISQ) are periplasmic. Residues 142 to 162 (QDIIQTLIAGSITLIVILLRR) traverse the membrane as a helical segment. Topologically, residues 163–179 (KDLLLFCFDPNHAKAIG) are cytoplasmic. A helical transmembrane segment spans residues 180–200 (LRTQVMYYTLLSVLALTIVAA). The Periplasmic segment spans residues 201 to 202 (LQ). Residues 203–223 (TAGIILVISMLVTPGSIGYLL) form a helical membrane-spanning segment. At 224–228 (SDRFD) the chain is on the cytoplasmic side. The helical transmembrane segment at 229-249 (HMLWYSVVSSVLSCVLGTYLS) threads the bilayer. Residues 250-255 (YHFDVS) are Periplasmic-facing. A helical transmembrane segment spans residues 256–276 (TGGMIVVILTTLFVIAMIGAP). Residues 277–306 (KYGILAQEWRKRSGPNPEDDENQTVVVDQV) are Cytoplasmic-facing.

This sequence belongs to the ABC-3 integral membrane protein family.

It is found in the cell membrane. In terms of biological role, part of an ATP-driven transport system for manganese. In Synechocystis sp. (strain ATCC 27184 / PCC 6803 / Kazusa), this protein is Manganese transport system membrane protein MntB (mntB).